Here is a 122-residue protein sequence, read N- to C-terminus: MKLLTSLVFCSLLLGVCHGGFFSFIGEAFQGAGDMWRAYTDMKEAGWKDGDKYFHARGNYDAAQRGPGGVWAAEKISDARESFQEFFGRGHEDTMADQEANRHGRSGKDPNYYRPPGLPAKY.

An N-terminal signal peptide occupies residues 1-19; that stretch reads MKLLTSLVFCSLLLGVCHG. Over residues 89–108 the composition is skewed to basic and acidic residues; the sequence is RGHEDTMADQEANRHGRSGK. The interval 89-122 is disordered; the sequence is RGHEDTMADQEANRHGRSGKDPNYYRPPGLPAKY.

This sequence belongs to the SAA family. Apolipoprotein of the HDL complex. As to expression, expressed by the liver; secreted in plasma.

The protein localises to the secreted. Functionally, major acute phase reactant. The polypeptide is Serum amyloid A-2 protein (Mus musculus (Mouse)).